Here is a 406-residue protein sequence, read N- to C-terminus: Exodeoxyribonuclease 7 large subunit (406 aa).

Belongs to the XseA family. Heterooligomer composed of large and small subunits.

It localises to the cytoplasm. It catalyses the reaction Exonucleolytic cleavage in either 5'- to 3'- or 3'- to 5'-direction to yield nucleoside 5'-phosphates.. Bidirectionally degrades single-stranded DNA into large acid-insoluble oligonucleotides, which are then degraded further into small acid-soluble oligonucleotides. The sequence is that of Exodeoxyribonuclease 7 large subunit from Thermobifida fusca (strain YX).